We begin with the raw amino-acid sequence, 184 residues long: Cytosolic Prostaglandin E synthase (184 aa).

The CS domain occupies 7 to 96 (LIPPPVSWAQ…AAGPYWSSLT (90 aa)). Positions 115-184 (ESDDEEGDQK…EGDKEKKPAA (70 aa)) are disordered. Phosphoserine occurs at positions 116, 127, 135, 156, and 162. Positions 147 to 158 (FNVDDEEEDSDD) are enriched in acidic residues. The segment covering 175 to 184 (EGDKEKKPAA) has biased composition (basic and acidic residues).

The protein belongs to the p23/wos2 family.

The protein localises to the cytoplasm. The enzyme catalyses prostaglandin H2 = prostaglandin E2. Cytosolic prostaglandin synthase that catalyzes the oxidoreduction of prostaglandin endoperoxide H2 (PGH2) to prostaglandin E2 (PGE2). Through production of PGE2 may regulate the activity of non-muscle myosin II in an autocrine or paracrine fashion; this may influence border cell and nurse cell stiffness to facilitate border cell migration during oogenesis. This is Cytosolic Prostaglandin E synthase from Drosophila melanogaster (Fruit fly).